We begin with the raw amino-acid sequence, 341 residues long: uncharacterized protein (341 aa).

Residue isoleucine 58 to leucine 82 coordinates NADP(+). Serine 194 contacts substrate. Tyrosine 207 acts as the Proton acceptor in catalysis. Positions aspartate 309–serine 329 are disordered.

Belongs to the short-chain dehydrogenases/reductases (SDR) family.

This is an uncharacterized protein from Mycobacterium bovis (strain ATCC BAA-935 / AF2122/97).